Here is a 313-residue protein sequence, read N- to C-terminus: Porphobilinogen deaminase (313 aa).

S-(dipyrrolylmethanemethyl)cysteine is present on Cys242.

This sequence belongs to the HMBS family. Monomer. It depends on dipyrromethane as a cofactor.

The enzyme catalyses 4 porphobilinogen + H2O = hydroxymethylbilane + 4 NH4(+). Its pathway is porphyrin-containing compound metabolism; protoporphyrin-IX biosynthesis; coproporphyrinogen-III from 5-aminolevulinate: step 2/4. Functionally, tetrapolymerization of the monopyrrole PBG into the hydroxymethylbilane pre-uroporphyrinogen in several discrete steps. The polypeptide is Porphobilinogen deaminase (Pseudomonas paraeruginosa (strain DSM 24068 / PA7) (Pseudomonas aeruginosa (strain PA7))).